Consider the following 684-residue polypeptide: Rabphilin-3A (684 aa).

Residues 1–21 (MTDTVVNRWMYPGDGPLQSND) are disordered. The RabBD domain occupies 40–157 (QRKQEELTDE…KRSGAWFFKG (118 aa)). Residues 88–145 (GDGVNRCILCGEQLGMLGSACVVCEDCKKNVCTKCGVETSNNRPHPVWLCKICLEQRE) form an FYVE-type zinc finger. Zn(2+) contacts are provided by cysteine 94, cysteine 97, cysteine 111, cysteine 114, cysteine 119, cysteine 122, cysteine 137, and cysteine 140. The disordered stretch occupies residues 162-377 (VLPQPMPIKK…EEEEANSYDS (216 aa)). The span at 199–208 (ARGDMEDRRA) shows a compositional bias: basic and acidic residues. At arginine 223 the chain carries Omega-N-methylarginine. The span at 243–252 (RDSEGWDHGH) shows a compositional bias: basic and acidic residues. The residue at position 274 (serine 274) is a Phosphoserine. Residues 283–299 (ASMPSPAPPQPVQPGPP) are compositionally biased toward pro residues. Positions 301–310 (GSRAAPGPGR) are enriched in low complexity. The 123-residue stretch at 382 to 504 (TLGALEFSLL…KANQRKNFNI (123 aa)) folds into the C2 1 domain. Ca(2+) is bound by residues methionine 412, aspartate 413, aspartate 419, aspartate 474, glutamate 475, aspartate 476, glutamate 482, glutamate 529, aspartate 571, aspartate 577, aspartate 631, tyrosine 632, aspartate 633, and aspartate 639. A C2 2 domain is found at 540-673 (ERGKILVSLM…NKDKKIERWH (134 aa)). A phosphoserine mark is found at serine 682 and serine 683.

As to quaternary structure, interacts with RAB3B, RAB3C, RAB3D, RAB8A, RAB27A and RAB27B. Interacts with RAB3A; this interaction recruits RPH3A to synaptic vesicules. Interacts (via C2B domain) with SNAP25. Interacts with deubiquitinating enzyme CAND1; this interaction results in the deubiquitination of RPH3A. Interacts with GRIN2A and DLG4; this ternary complex regulates NMDA receptor composition at postsynaptic membranes. Interacts with SNCA. The cofactor is Ca(2+). Ubiquitinated. Deubiquitinated by CAND1 to prevent its degradation. In terms of tissue distribution, specifically expressed in brain.

Its subcellular location is the cytoplasmic vesicle. It is found in the secretory vesicle. It localises to the synaptic vesicle membrane. The protein resides in the cell projection. The protein localises to the dendritic spine. Its subcellular location is the postsynaptic cell membrane. It is found in the membrane. Functionally, plays an essential role in docking and fusion steps of regulated exocytosis. At the presynaptic level, RPH3A is recruited by RAB3A to the synaptic vesicle membrane in a GTP-dependent manner where it modulates synaptic vesicle trafficking and calcium-triggered neurotransmitter release. In the post-synaptic compartment, forms a ternary complex with GRIN2A and DLG4 and regulates NMDA receptor stability. Also plays a role in the exocytosis of arginine vasopressin hormone. In Rattus norvegicus (Rat), this protein is Rabphilin-3A (Rph3a).